Here is a 201-residue protein sequence, read N- to C-terminus: MSRYRGPRLKKIRRLGALPGLTRKTPKSGSNLKKKFNSGKKEQYRIRLQEKQKLRFHYGLTERQLLRYVHIAGKAKRSTGQVLLQLLEMRLDNILFRLGMASTIPGARQLVNHRHILVNGRIVNIPSFRCKPRDIITTKDNQRSKGLVQNYIASSDPGKLPSHLTIDTLEYKGLVNKILDRKWVGLKINELLVVEYYSRQT.

In terms of domain architecture, S4 RNA-binding spans 89–157 (MRLDNILFRL…VQNYIASSDP (69 aa)).

This sequence belongs to the universal ribosomal protein uS4 family. In terms of assembly, part of the 30S ribosomal subunit. Contacts protein S5. The interaction surface between S4 and S5 is involved in control of translational fidelity.

Its subcellular location is the plastid. The protein localises to the chloroplast. Functionally, one of the primary rRNA binding proteins, it binds directly to 16S rRNA where it nucleates assembly of the body of the 30S subunit. Its function is as follows. With S5 and S12 plays an important role in translational accuracy. This is Small ribosomal subunit protein uS4c (rps4) from Hordeum vulgare (Barley).